Consider the following 373-residue polypeptide: SUN domain-containing protein 5 (373 aa).

At 1-103 (MPRTRNIGAL…LFCQKVMEKM (103 aa)) the chain is on the nuclear side. A helical membrane pass occupies residues 104–120 (GLLVLCVFGFWMFSMHL). Residues 121–373 (PSKVEVWQDD…PKDSHLEPLS (253 aa)) are Perinuclear space-facing. Residues 136–180 (LQSLRMYQEKVRHHTGEIQDLRGSMNQLIAKLQKMEAISDEQKMA) adopt a coiled-coil conformation. The 159-residue stretch at 204-362 (ASIDFEHTSA…YRVRVHGSVT (159 aa)) folds into the SUN domain.

Probable homotrimer. Interacts with DNAJB13. Highly glycosylated in the Golgi apparatus during spermiogenesis. As to expression, testis-specific, abundantly expressed in spermatocytes and round spermatids.

It is found in the nucleus inner membrane. It localises to the golgi apparatus. Functionally, plays an essential role in anchoring sperm head to the tail. Is responsible for the attachment of the coupling apparatus to the sperm nuclear envelope. This is SUN domain-containing protein 5 (Sun5) from Mus musculus (Mouse).